Here is a 391-residue protein sequence, read N- to C-terminus: MVTQNKKILIITGSFGNGHMQVTQSIVNQLNDMNLDHLSVIEHDLFMEAHPILTSICKKWYINSFKYFRNMYKGFYYSRPDKLDKCFYKYYGLNKLINLLIKEKPDLILLTFPTPVMSVLTEQFNINIPVATVMTDYRLHKNWITPYSTRYYVATKETKKDFIDVGIDPSTVKVTGIPIDNKFETPINQKQWLIDNNLDPDKQTILMSAGAFGVSKGFDTMITDILAKSANAQVVMICGKSKELKRSLTAKFKSNENVLILGYTKHMNEWMASSQLMITKPGGITITEGFARCIPMIFLNPAPGQELENALYFEEKGFGKIADTPEEAIKIVASLTNGNEQLTNMISTMEQDKIKYATQTICRDLLDLIGHSSQPQEIYGKVPLYARFFVK.

The protein belongs to the glycosyltransferase 28 family. UgtP subfamily.

The protein resides in the cell membrane. It carries out the reaction a 1,2-diacyl-3-O-(beta-D-glucopyranosyl)-sn-glycerol + UDP-alpha-D-glucose = a 1,2-diacyl-3-O-(beta-D-Glc-(1-&gt;6)-beta-D-Glc)-sn-glycerol + UDP + H(+). It catalyses the reaction a 1,2-diacyl-sn-glycerol + UDP-alpha-D-glucose = a 1,2-diacyl-3-O-(beta-D-glucopyranosyl)-sn-glycerol + UDP + H(+). Its pathway is glycolipid metabolism; diglucosyl-diacylglycerol biosynthesis. Functionally, processive glucosyltransferase involved in the biosynthesis of both the bilayer- and non-bilayer-forming membrane glucolipids. Is able to successively transfer two glucosyl residues to diacylglycerol (DAG), thereby catalyzing the formation of beta-monoglucosyl-DAG (3-O-(beta-D-glucopyranosyl)-1,2-diacyl-sn-glycerol) and beta-diglucosyl-DAG (3-O-(beta-D-glucopyranosyl-beta-(1-&gt;6)-D-glucopyranosyl)-1,2-diacyl-sn-glycerol). Beta-diglucosyl-DAG is the predominant glycolipid found in Bacillales and is also used as a membrane anchor for lipoteichoic acid (LTA). In Staphylococcus aureus (strain bovine RF122 / ET3-1), this protein is Processive diacylglycerol beta-glucosyltransferase.